Reading from the N-terminus, the 89-residue chain is Small ribosomal subunit protein uS15 (89 aa).

Belongs to the universal ribosomal protein uS15 family. In terms of assembly, part of the 30S ribosomal subunit. Forms a bridge to the 50S subunit in the 70S ribosome, contacting the 23S rRNA.

In terms of biological role, one of the primary rRNA binding proteins, it binds directly to 16S rRNA where it helps nucleate assembly of the platform of the 30S subunit by binding and bridging several RNA helices of the 16S rRNA. Functionally, forms an intersubunit bridge (bridge B4) with the 23S rRNA of the 50S subunit in the ribosome. The sequence is that of Small ribosomal subunit protein uS15 from Rhodococcus erythropolis (strain PR4 / NBRC 100887).